The chain runs to 411 residues: Imidazolonepropionase (411 aa).

Fe(3+)-binding residues include histidine 75 and histidine 77. Residues histidine 75 and histidine 77 each contribute to the Zn(2+) site. 4-imidazolone-5-propanoate-binding residues include arginine 84, tyrosine 147, and histidine 180. Tyrosine 147 provides a ligand contact to N-formimidoyl-L-glutamate. Position 245 (histidine 245) interacts with Fe(3+). Histidine 245 serves as a coordination point for Zn(2+). Glutamine 248 contributes to the 4-imidazolone-5-propanoate binding site. Aspartate 320 is a binding site for Fe(3+). A Zn(2+)-binding site is contributed by aspartate 320. Residues asparagine 322 and glycine 324 each coordinate N-formimidoyl-L-glutamate. 4-imidazolone-5-propanoate is bound at residue threonine 325.

The protein belongs to the metallo-dependent hydrolases superfamily. HutI family. It depends on Zn(2+) as a cofactor. The cofactor is Fe(3+).

It is found in the cytoplasm. It carries out the reaction 4-imidazolone-5-propanoate + H2O = N-formimidoyl-L-glutamate. The protein operates within amino-acid degradation; L-histidine degradation into L-glutamate; N-formimidoyl-L-glutamate from L-histidine: step 3/3. Catalyzes the hydrolytic cleavage of the carbon-nitrogen bond in imidazolone-5-propanoate to yield N-formimidoyl-L-glutamate. It is the third step in the universal histidine degradation pathway. This chain is Imidazolonepropionase, found in Aeromonas salmonicida (strain A449).